The following is a 63-amino-acid chain: MVGGRVAHPVLKGPSEVKELIIGSVLGLAAGGLWKMHHWNEQRKTRAFYDLLEKGEISVVVQE.

A helical membrane pass occupies residues 15 to 34; the sequence is SEVKELIIGSVLGLAAGGLW.

This sequence belongs to the cytochrome c oxidase subunit 5C family.

Its subcellular location is the mitochondrion inner membrane. In terms of biological role, this protein is one of the nuclear-coded polypeptide chains of cytochrome c oxidase, the terminal oxidase in mitochondrial electron transport. This chain is Cytochrome c oxidase subunit 5C-1 (COX5C1), found in Helianthus annuus (Common sunflower).